The chain runs to 161 residues: Large ribosomal subunit protein uL15 (161 aa).

The disordered stretch occupies residues 1-50 (MKLSDIADNAGSRKKRMRIGRGIGSGKGKTGGRGGKGQTARSGVRINGFE). Positions 21 to 37 (RGIGSGKGKTGGRGGKG) are enriched in gly residues.

Belongs to the universal ribosomal protein uL15 family. Part of the 50S ribosomal subunit.

Functionally, binds to the 23S rRNA. The sequence is that of Large ribosomal subunit protein uL15 from Nitrobacter winogradskyi (strain ATCC 25391 / DSM 10237 / CIP 104748 / NCIMB 11846 / Nb-255).